The primary structure comprises 1782 residues: Atrochrysone carboxylic acid synthase (1782 aa).

Positions 41-270 (HTYTKDRRYP…ALPVYGGLCH (230 aa)) are N-terminal acylcarrier protein transacylase domain (SAT). Residues 407–841 (QSKIAIVGMS…GGNSTLAIEE (435 aa)) form the Ketosynthase family 3 (KS3) domain. Catalysis depends on for beta-ketoacyl synthase activity residues cysteine 580, histidine 716, and histidine 759. Residues 946 to 1266 (FAFTGQGSSY…LGILHCAGVP (321 aa)) form a malonyl-CoA:ACP transacylase (MAT) domain region. The tract at residues 1331 to 1648 (TSTVQQIIHE…RILLNRFFSA (318 aa)) is product template (PT) domain. The tract at residues 1335 to 1468 (QQIIHEQYDG…ATVYYEEASD (134 aa)) is N-terminal hotdog fold. The PKS/mFAS DH domain occupies 1335 to 1643 (QQIIHEQYDG…FRRYPRILLN (309 aa)). The active-site Proton acceptor; for dehydratase activity is histidine 1367. A C-terminal hotdog fold region spans residues 1495-1643 (VANRFTRRMA…FRRYPRILLN (149 aa)). Catalysis depends on aspartate 1554, which acts as the Proton donor; for dehydratase activity. The disordered stretch occupies residues 1653–1703 (ARKSTPATSAPAPAPPAGSEALQPKAAPASTPAAPASADAPTTNGVKAAAE). A compositionally biased stretch (low complexity) spans 1678 to 1695 (AAPASTPAAPASADAPTT). The region spanning 1704 to 1781 (PDANSTAAKA…DLKSWLLEYY (78 aa)) is the Carrier domain. The residue at position 1741 (serine 1741) is an O-(pantetheine 4'-phosphoryl)serine.

As to expression, specifically expressed in conidia.

The catalysed reaction is holo-[ACP] + 8 malonyl-CoA + 8 H(+) = atrochrysone carboxyl-[ACP] + 8 CO2 + 8 CoA + 2 H2O. Its pathway is secondary metabolite biosynthesis. In terms of biological role, non-reducing polyketide synthase; part of the gene cluster that mediates the biosynthesis of trypacidin, a mycotoxin with antiprotozoal activity and that plays a role in the infection process. The pathway begins with the synthesis of atrochrysone thioester by the polyketide synthase (PKS) tpcC. The atrochrysone carboxyl ACP thioesterase tpcB then breaks the thioester bond and releases the atrochrysone carboxylic acid from tpcC. The decarboxylase tpcK converts atrochrysone carboxylic acid to atrochrysone which is further reduced into emodin anthrone. The next step is performed by the emodin anthrone oxygenase tpcL that catalyzes the oxidation of emodin anthrone to emodin. Emodin O-methyltransferase encoded by tpcA catalyzes methylation of the 8-hydroxy group of emodin to form questin. Ring cleavage of questin by questin oxidase tpcI leads to desmethylsulochrin via several intermediates including questin epoxide. Another methylation step catalyzed by tpcM leads to the formation of sulochrin which is further converted to monomethylsulfochrin by tpcH. Finally, the tpcJ catalyzes the conversion of monomethylsulfochrin to trypacidin. Trypacidin is toxic for human pulmonary and bronchial epithelial cells by initiating the intracellular formation of nitric oxide (NO) and hydrogen peroxide (H(2)O(2)), thus triggering host necrotic cell death. The trypacidin pathway is also able to produce endocrocin via a distinct route from the endocrocin Enc pathway. This is Atrochrysone carboxylic acid synthase from Aspergillus fumigatus (strain ATCC MYA-4609 / CBS 101355 / FGSC A1100 / Af293) (Neosartorya fumigata).